Reading from the N-terminus, the 448-residue chain is Probable alpha-galactosidase B (448 aa).

A signal peptide spans 1–23 (MSRFHLPLAAAVVLVSCLWSANA). Cystine bridges form between C46–C78 and C128–C158. The active-site Nucleophile is the D156. N-linked (GlcNAc...) asparagine glycosylation is found at N163 and N181. Position 226–230 (226–230 (EWGQA)) interacts with substrate. The N-linked (GlcNAc...) asparagine glycan is linked to N237. D248 acts as the Proton donor in catalysis.

The protein belongs to the glycosyl hydrolase 27 family.

The protein resides in the secreted. It carries out the reaction Hydrolysis of terminal, non-reducing alpha-D-galactose residues in alpha-D-galactosides, including galactose oligosaccharides, galactomannans and galactolipids.. Hydrolyzes a variety of simple alpha-D-galactoside as well as more complex molecules such as oligosaccharides and polysaccharides. The chain is Probable alpha-galactosidase B (aglB) from Aspergillus clavatus (strain ATCC 1007 / CBS 513.65 / DSM 816 / NCTC 3887 / NRRL 1 / QM 1276 / 107).